The primary structure comprises 402 residues: tRNA(Met) cytidine acetate ligase (402 aa).

Residues 7-20 (ITEY…HELH), Gly102, Asn171, and Arg196 contribute to the ATP site.

It belongs to the TmcAL family.

It is found in the cytoplasm. It carries out the reaction cytidine(34) in elongator tRNA(Met) + acetate + ATP = N(4)-acetylcytidine(34) in elongator tRNA(Met) + AMP + diphosphate. Its function is as follows. Catalyzes the formation of N(4)-acetylcytidine (ac(4)C) at the wobble position of elongator tRNA(Met), using acetate and ATP as substrates. First activates an acetate ion to form acetyladenylate (Ac-AMP) and then transfers the acetyl group to tRNA to form ac(4)C34. The sequence is that of tRNA(Met) cytidine acetate ligase from Clostridium perfringens (strain SM101 / Type A).